Consider the following 394-residue polypeptide: Elongation factor Tu (394 aa).

Positions 10–205 (KPHMNVGTIG…SMDNYFDLPE (196 aa)) constitute a tr-type G domain. Positions 19 to 26 (GHVDHGKT) are G1. 19–26 (GHVDHGKT) contributes to the GTP binding site. Residue Thr26 participates in Mg(2+) binding. Residues 61–65 (GITIN) form a G2 region. Residues 82 to 85 (DCPG) form a G3 region. GTP contacts are provided by residues 82–86 (DCPGH) and 137–140 (NKLD). The interval 137–140 (NKLD) is G4. Residues 173–175 (SAF) form a G5 region.

The protein belongs to the TRAFAC class translation factor GTPase superfamily. Classic translation factor GTPase family. EF-Tu/EF-1A subfamily. Monomer.

It is found in the cytoplasm. The catalysed reaction is GTP + H2O = GDP + phosphate + H(+). In terms of biological role, GTP hydrolase that promotes the GTP-dependent binding of aminoacyl-tRNA to the A-site of ribosomes during protein biosynthesis. The protein is Elongation factor Tu of Borreliella burgdorferi (strain ATCC 35210 / DSM 4680 / CIP 102532 / B31) (Borrelia burgdorferi).